A 140-amino-acid polypeptide reads, in one-letter code: Phosphopantetheine adenylyltransferase (140 aa).

Residue serine 9 coordinates substrate. ATP-binding positions include 9 to 10 (SF) and histidine 17. Positions 41, 74, and 88 each coordinate substrate. Residues 89 to 91 (GLR), glutamate 99, and 124 to 130 (KRSLSST) contribute to the ATP site.

The protein belongs to the bacterial CoaD family. Homohexamer. Requires Mg(2+) as cofactor.

The protein localises to the cytoplasm. The enzyme catalyses (R)-4'-phosphopantetheine + ATP + H(+) = 3'-dephospho-CoA + diphosphate. The protein operates within cofactor biosynthesis; coenzyme A biosynthesis; CoA from (R)-pantothenate: step 4/5. Its function is as follows. Reversibly transfers an adenylyl group from ATP to 4'-phosphopantetheine, yielding dephospho-CoA (dPCoA) and pyrophosphate. The protein is Phosphopantetheine adenylyltransferase of Mycoplasma capricolum subsp. capricolum (strain California kid / ATCC 27343 / NCTC 10154).